The primary structure comprises 429 residues: Adenylosuccinate synthetase (429 aa).

Residues Gly-11–Lys-17 and Gly-39–Thr-41 contribute to the GTP site. The active-site Proton acceptor is the Asp-12. Mg(2+) contacts are provided by Asp-12 and Gly-39. Residues Asp-12 to Lys-15, Asn-37 to His-40, Thr-130, Arg-144, Asn-226, Thr-241, and Arg-305 each bind IMP. His-40 (proton donor) is an active-site residue. Substrate is bound at residue Val-301 to Arg-307. GTP contacts are provided by residues Arg-307, Lys-333–Asp-335, and Gly-415–Gly-417.

This sequence belongs to the adenylosuccinate synthetase family. In terms of assembly, homodimer. The cofactor is Mg(2+).

The protein resides in the cytoplasm. It catalyses the reaction IMP + L-aspartate + GTP = N(6)-(1,2-dicarboxyethyl)-AMP + GDP + phosphate + 2 H(+). It participates in purine metabolism; AMP biosynthesis via de novo pathway; AMP from IMP: step 1/2. Functionally, plays an important role in the de novo pathway and in the salvage pathway of purine nucleotide biosynthesis. Catalyzes the first committed step in the biosynthesis of AMP from IMP. The polypeptide is Adenylosuccinate synthetase (Yarrowia lipolytica (strain CLIB 122 / E 150) (Yeast)).